The sequence spans 99 residues: Large ribosomal subunit protein uL23 (99 aa).

This sequence belongs to the universal ribosomal protein uL23 family. Part of the 50S ribosomal subunit. Contacts protein L29, and trigger factor when it is bound to the ribosome.

One of the early assembly proteins it binds 23S rRNA. One of the proteins that surrounds the polypeptide exit tunnel on the outside of the ribosome. Forms the main docking site for trigger factor binding to the ribosome. This is Large ribosomal subunit protein uL23 from Xanthomonas axonopodis pv. citri (strain 306).